A 648-amino-acid polypeptide reads, in one-letter code: DNA gyrase subunit B (648 aa).

The Toprim domain occupies Ser433–Pro547. The Mg(2+) site is built by Glu439, Asp512, and Asp514.

Belongs to the type II topoisomerase GyrB family. As to quaternary structure, heterotetramer, composed of two GyrA and two GyrB chains. In the heterotetramer, GyrA contains the active site tyrosine that forms a transient covalent intermediate with DNA, while GyrB binds cofactors and catalyzes ATP hydrolysis. It depends on Mg(2+) as a cofactor. Mn(2+) serves as cofactor. Requires Ca(2+) as cofactor.

It is found in the cytoplasm. The catalysed reaction is ATP-dependent breakage, passage and rejoining of double-stranded DNA.. Functionally, a type II topoisomerase that negatively supercoils closed circular double-stranded (ds) DNA in an ATP-dependent manner to modulate DNA topology and maintain chromosomes in an underwound state. Negative supercoiling favors strand separation, and DNA replication, transcription, recombination and repair, all of which involve strand separation. Also able to catalyze the interconversion of other topological isomers of dsDNA rings, including catenanes and knotted rings. Type II topoisomerases break and join 2 DNA strands simultaneously in an ATP-dependent manner. This Mycoplasmoides gallisepticum (strain R(low / passage 15 / clone 2)) (Mycoplasma gallisepticum) protein is DNA gyrase subunit B.